Here is a 126-residue protein sequence, read N- to C-terminus: Holo-[acyl-carrier-protein] synthase (126 aa).

2 residues coordinate Mg(2+): D9 and E58.

It belongs to the P-Pant transferase superfamily. AcpS family. It depends on Mg(2+) as a cofactor.

It is found in the cytoplasm. It catalyses the reaction apo-[ACP] + CoA = holo-[ACP] + adenosine 3',5'-bisphosphate + H(+). In terms of biological role, transfers the 4'-phosphopantetheine moiety from coenzyme A to a Ser of acyl-carrier-protein. In Aliivibrio fischeri (strain MJ11) (Vibrio fischeri), this protein is Holo-[acyl-carrier-protein] synthase.